The chain runs to 260 residues: Taurine import ATP-binding protein TauB (260 aa).

The 230-residue stretch at 6–235 (AHQVSVVYAS…RYAAGESMRS (230 aa)) folds into the ABC transporter domain. 40-47 (GASGCGKS) is an ATP binding site.

Belongs to the ABC transporter superfamily. Taurine importer (TC 3.A.1.17.1) family. In terms of assembly, the complex is composed of two ATP-binding proteins (TauB), two transmembrane proteins (TauC) and a solute-binding protein (TauA).

It localises to the cell inner membrane. The enzyme catalyses taurine(out) + ATP + H2O = taurine(in) + ADP + phosphate + H(+). Part of the ABC transporter complex TauABC involved in taurine import. Responsible for energy coupling to the transport system. The polypeptide is Taurine import ATP-binding protein TauB (Burkholderia thailandensis (strain ATCC 700388 / DSM 13276 / CCUG 48851 / CIP 106301 / E264)).